Consider the following 1093-residue polypeptide: Atos homolog protein A (1093 aa).

Residues 29–37 (ALLITEGRT) form a transactivation domain 1 (TAD1) region. Disordered regions lie at residues 396 to 479 (AGRP…GNPL), 558 to 579 (SSKSKLKTPDTPISPRLDGESK), and 746 to 788 (HDNF…GSMR). A compositionally biased stretch (basic and acidic residues) spans 746–763 (HDNFKNKNRQDKTKAAHD). A required for macropage invasion region spans residues 895–952 (LLGNFEESVLNFRLDPLGIVEGFTAEVGASGVFCPTHMTLPVEVSFYSVSDDNAPSPY). The tract at residues 979–987 (FNPNKTVVK) is transactivation domain 2 (TAD2).

Belongs to the ATOS family.

It is found in the nucleus. Functionally, transcription regulator that syncronizes transcriptional and translational programs to promote macrophage invasion of tissues. This is Atos homolog protein A (ATOSA) from Gallus gallus (Chicken).